A 336-amino-acid chain; its full sequence is UPF0324 membrane protein SP_0034 (336 aa).

The next 8 membrane-spanning stretches (helical) occupy residues 65–84 (LLQYAVVLLGFGLNISQVFA), 91–113 (PVILSTISIALIIAYLFQRFFAL), 118–140 (ATLVGVGSSICGGSAIAATAPVI), 153–175 (VIFFFNVLAALIFPTLGTWLHLS), 211–233 (SATIVKLTRTLAIIPITLFLSYW), 249–271 (VFPLFILYFILASLLTTLLTSLG), 286–305 (FLIVMAMSAIGLKTNLVAMV), and 312–334 (ILLGAICWIAIILTTLGMQTLIG).

The protein belongs to the UPF0324 family.

The protein localises to the cell membrane. The protein is UPF0324 membrane protein SP_0034 of Streptococcus pneumoniae serotype 4 (strain ATCC BAA-334 / TIGR4).